The chain runs to 1063 residues: DNA-directed RNA polymerase subunit beta (1063 aa).

The protein belongs to the RNA polymerase beta chain family. In terms of assembly, in plastids the minimal PEP RNA polymerase catalytic core is composed of four subunits: alpha, beta, beta', and beta''. When a (nuclear-encoded) sigma factor is associated with the core the holoenzyme is formed, which can initiate transcription.

It is found in the plastid. The protein resides in the chloroplast. It catalyses the reaction RNA(n) + a ribonucleoside 5'-triphosphate = RNA(n+1) + diphosphate. In terms of biological role, DNA-dependent RNA polymerase catalyzes the transcription of DNA into RNA using the four ribonucleoside triphosphates as substrates. This Zygnema circumcarinatum (Green alga) protein is DNA-directed RNA polymerase subunit beta.